The primary structure comprises 487 residues: Serralysin (487 aa).

Residues 1-16 (MQSTKKAIEITESSLA) constitute a propeptide that is removed on maturation. A Zn(2+)-binding site is contributed by His192. The active site involves Glu193. Positions 196, 202, and 232 each coordinate Zn(2+). 33 residues coordinate Ca(2+): Arg269, Gly271, Thr273, Asp301, Gly303, Gly304, Asp306, Thr343, Glu345, Gly350, Gly352, Asp354, Asn359, Ala361, Asn363, Gly367, Gly368, Ala369, Gly370, Asp372, Gly376, Gly377, Gly378, Gly379, Asp381, Gly385, Gly386, Ala387, Gly388, Asp390, Asp399, Asp406, and Asp416. Hemolysin-type calcium-binding repeat units lie at residues 348-365 (IGGSGNDVIVGNAANNVL) and 366-383 (KGGAGNDVLFGGGGADEL).

Belongs to the peptidase M10B family. Requires Ca(2+) as cofactor. It depends on Zn(2+) as a cofactor.

Its subcellular location is the secreted. The catalysed reaction is Preferential cleavage of bonds with hydrophobic residues in P1'.. Has insecticidal activity against the locust M.palpalis. When administered orally to locusts at a low dose it causes them to lie on their sides exhibiting sporadic limb movements and muscular twitching, followed by full recovery. When administered at higher doses the same symptoms are observed, followed by death. The protein is Serralysin of Serratia marcescens.